We begin with the raw amino-acid sequence, 821 residues long: Probable E3 ubiquitin-protein ligase hulA (821 aa).

Residues Met1 to Arg112 enclose the C2 domain. Disordered stretches follow at residues Pro140–Arg240 and Arg255–Asp359. Polar residues-rich tracts occupy residues Ala151 to Pro173, Ala181 to Thr201, Gln217 to Asp228, and Arg255 to Arg272. Residues Gly231 to Ser264 enclose the WW 1 domain. Residues Leu281–Thr296 show a composition bias toward basic and acidic residues. The span at Gly297–Ser306 shows a compositional bias: polar residues. Over residues Pro311 to Gly339 the composition is skewed to low complexity. 2 consecutive WW domains span residues Gly339 to Arg372 and Gly399 to Leu432. Positions Ser488 to Glu821 constitute an HECT domain. The active-site Glycyl thioester intermediate is Cys789.

Belongs to the RSP5/NEDD4 family. Interacts with creD.

It is found in the cytoplasm. It catalyses the reaction S-ubiquitinyl-[E2 ubiquitin-conjugating enzyme]-L-cysteine + [acceptor protein]-L-lysine = [E2 ubiquitin-conjugating enzyme]-L-cysteine + N(6)-ubiquitinyl-[acceptor protein]-L-lysine.. Its pathway is protein modification; protein ubiquitination. Its function is as follows. E3 ubiquitin-protein ligase which accepts ubiquitin from an E2 ubiquitin-conjugating enzyme in the form of a thioester and then directly transfers the ubiquitin to targeted substrates. Probably involved in the regulatory network controlling carbon source utilization. The protein is Probable E3 ubiquitin-protein ligase hulA (hulA) of Aspergillus niger (strain ATCC MYA-4892 / CBS 513.88 / FGSC A1513).